Here is a 352-residue protein sequence, read N- to C-terminus: 4-hydroxy-3-methylbut-2-en-1-yl diphosphate synthase (flavodoxin) (352 aa).

[4Fe-4S] cluster contacts are provided by cysteine 262, cysteine 265, cysteine 297, and glutamate 304.

This sequence belongs to the IspG family. [4Fe-4S] cluster is required as a cofactor.

The enzyme catalyses (2E)-4-hydroxy-3-methylbut-2-enyl diphosphate + oxidized [flavodoxin] + H2O + 2 H(+) = 2-C-methyl-D-erythritol 2,4-cyclic diphosphate + reduced [flavodoxin]. Its pathway is isoprenoid biosynthesis; isopentenyl diphosphate biosynthesis via DXP pathway; isopentenyl diphosphate from 1-deoxy-D-xylulose 5-phosphate: step 5/6. Functionally, converts 2C-methyl-D-erythritol 2,4-cyclodiphosphate (ME-2,4cPP) into 1-hydroxy-2-methyl-2-(E)-butenyl 4-diphosphate. The chain is 4-hydroxy-3-methylbut-2-en-1-yl diphosphate synthase (flavodoxin) from Nitratiruptor sp. (strain SB155-2).